We begin with the raw amino-acid sequence, 223 residues long: Adenylate kinase (223 aa).

Residue 10–15 (GSGKGT) participates in ATP binding. Residues 30–59 (ESGAIFREHIGGGTELGKQAKAFIERGDLV) are NMP. AMP is bound by residues Ser-31, Arg-36, 57–59 (DLV), 84–87 (GFPR), and Gln-91. Positions 125–164 (GRRLCKNDNNHPNNIFIDAIKPNGDVCRVCGGELSARSDD) are LID. Position 126 (Arg-126) interacts with ATP. AMP contacts are provided by Arg-161 and Arg-173. An ATP-binding site is contributed by Gly-209.

The protein belongs to the adenylate kinase family. As to quaternary structure, monomer.

It is found in the cytoplasm. It carries out the reaction AMP + ATP = 2 ADP. Its pathway is purine metabolism; AMP biosynthesis via salvage pathway; AMP from ADP: step 1/1. Catalyzes the reversible transfer of the terminal phosphate group between ATP and AMP. Plays an important role in cellular energy homeostasis and in adenine nucleotide metabolism. The chain is Adenylate kinase from Nitratidesulfovibrio vulgaris (strain ATCC 29579 / DSM 644 / CCUG 34227 / NCIMB 8303 / VKM B-1760 / Hildenborough) (Desulfovibrio vulgaris).